Reading from the N-terminus, the 71-residue chain is Small ribosomal subunit protein bS21 (71 aa).

This sequence belongs to the bacterial ribosomal protein bS21 family.

In Shewanella sp. (strain MR-4), this protein is Small ribosomal subunit protein bS21.